We begin with the raw amino-acid sequence, 93 residues long: Head virion protein G6P (93 aa).

Transmembrane regions (helical) follow at residues 25-45 (GVGI…LNLL) and 56-76 (ILDI…GSAL).

Belongs to the inovirus G6P protein family. Interacts with G3P; this interaction is required for proper integration of G3P and G6P into the virion.

It is found in the virion. Its subcellular location is the host membrane. Functionally, plays essential roles both in the entry of the viral genome into the bacterial host and in budding process. The formation of the G3P-G6P complex termed adsorption complex is essential for correct termination of filamentous phage assembly. This Pseudomonas phage Pf3 (Bacteriophage Pf3) protein is Head virion protein G6P (VI).